The sequence spans 347 residues: NADH-ubiquinone oxidoreductase chain 2 (347 aa).

The next 11 helical transmembrane spans lie at 1–21 (MNPL…AIVM), 25–45 (HWLT…PMLM), 59–79 (YFLT…MNLT), 96–116 (IIMT…FWVP), 127–147 (CLIL…MISP), 149–169 (INLN…GWGG), 178–198 (IMAY…AYNP), 200–220 (MTML…MLLI), 247–267 (IMLS…WMII), 276–296 (IIMP…YMRL), and 325–345 (LLSP…MMSL).

Belongs to the complex I subunit 2 family. In terms of assembly, core subunit of respiratory chain NADH dehydrogenase (Complex I) which is composed of 45 different subunits. Interacts with TMEM242.

It is found in the mitochondrion inner membrane. It carries out the reaction a ubiquinone + NADH + 5 H(+)(in) = a ubiquinol + NAD(+) + 4 H(+)(out). Its function is as follows. Core subunit of the mitochondrial membrane respiratory chain NADH dehydrogenase (Complex I) which catalyzes electron transfer from NADH through the respiratory chain, using ubiquinone as an electron acceptor. Essential for the catalytic activity and assembly of complex I. The protein is NADH-ubiquinone oxidoreductase chain 2 of Natalus stramineus (Mexican funnel-eared bat).